Reading from the N-terminus, the 464-residue chain is Glutamate--tRNA ligase (464 aa).

Positions 9-19 match the 'HIGH' region motif; it reads PSPTGYLHIGG. The 'KMSKS' region motif lies at 242-246; it reads KISKR. Residue K245 coordinates ATP.

This sequence belongs to the class-I aminoacyl-tRNA synthetase family. Glutamate--tRNA ligase type 1 subfamily. In terms of assembly, monomer.

It localises to the cytoplasm. It carries out the reaction tRNA(Glu) + L-glutamate + ATP = L-glutamyl-tRNA(Glu) + AMP + diphosphate. Its function is as follows. Catalyzes the attachment of glutamate to tRNA(Glu) in a two-step reaction: glutamate is first activated by ATP to form Glu-AMP and then transferred to the acceptor end of tRNA(Glu). The chain is Glutamate--tRNA ligase from Neisseria meningitidis serogroup A / serotype 4A (strain DSM 15465 / Z2491).